Here is a 553-residue protein sequence, read N- to C-terminus: 5'-nucleotidase domain-containing protein 2 (553 aa).

The interval 26-51 is disordered; it reads SSSPSCPGCGPPGPGAHCPSTPRSAP. Asp-106 functions as the Nucleophile in the catalytic mechanism. Residues Asp-106, Asp-108, and Asp-391 each contribute to the Mg(2+) site. The active-site Proton donor is the Asp-108.

Belongs to the 5'(3')-deoxyribonucleotidase family. As to quaternary structure, interacts with tyrosine 3-monooxygenase TH; the interaction results in reduced phosphorylation and decreased catalytic activity of TH. Expressed in eye iridocorneal angle.

The protein localises to the cytoplasm. Promotes dephosphorylation of tyrosine 3-monooxygenase TH which decreases TH catalytic activity and leads to reduced synthesis of catecholamines including dopamine, noradrenaline and adrenaline. The exact mechanism of activity is unknown but may act as a phosphatase or promote the activity of phosphatases or may inhibit phosphorylation by acting as a barrier to interfere with protein kinase access. The sequence is that of 5'-nucleotidase domain-containing protein 2 (Nt5dc2) from Rattus norvegicus (Rat).